The sequence spans 1005 residues: Probable beta-galactosidase A (1005 aa).

The N-terminal stretch at 1–18 (MKLLSVAAVALLAAQAAG) is a signal peptide. Residues Y96, N140, A141, and E142 each contribute to the substrate site. N156 carries N-linked (GlcNAc...) asparagine glycosylation. N199 is a substrate binding site. E200 (proton donor) is an active-site residue. A disulfide bond links C205 and C206. Y260 contributes to the substrate binding site. An intrachain disulfide couples C266 to C315. E298 functions as the Nucleophile in the catalytic mechanism. A substrate-binding site is contributed by Y364. N373, N402, N453, N478, N522, N622, N760, N777, N805, and N914 each carry an N-linked (GlcNAc...) asparagine glycan.

Belongs to the glycosyl hydrolase 35 family.

Its subcellular location is the secreted. It catalyses the reaction Hydrolysis of terminal non-reducing beta-D-galactose residues in beta-D-galactosides.. Its function is as follows. Cleaves beta-linked terminal galactosyl residues from gangliosides, glycoproteins, and glycosaminoglycans. The chain is Probable beta-galactosidase A (lacA) from Aspergillus flavus (strain ATCC 200026 / FGSC A1120 / IAM 13836 / NRRL 3357 / JCM 12722 / SRRC 167).